We begin with the raw amino-acid sequence, 104 residues long: Large ribosomal subunit protein uL24 (104 aa).

It belongs to the universal ribosomal protein uL24 family. In terms of assembly, part of the 50S ribosomal subunit.

In terms of biological role, one of two assembly initiator proteins, it binds directly to the 5'-end of the 23S rRNA, where it nucleates assembly of the 50S subunit. Functionally, one of the proteins that surrounds the polypeptide exit tunnel on the outside of the subunit. The protein is Large ribosomal subunit protein uL24 of Methylobacterium radiotolerans (strain ATCC 27329 / DSM 1819 / JCM 2831 / NBRC 15690 / NCIMB 10815 / 0-1).